The primary structure comprises 201 residues: Putative tRNA-binding protein YtpR (201 aa).

The tRNA-binding domain occupies 90–200; it reads VDLSPKFVVG…GDYEAGDAFQ (111 aa).

The polypeptide is Putative tRNA-binding protein YtpR (ytpR) (Bacillus subtilis (strain 168)).